The primary structure comprises 469 residues: Neuraminidase (469 aa).

At 1–6 (MNPNQK) the chain is on the intravirion side. Residues 7–27 (IITIGSICMVIGIVSLMLQIG) traverse the membrane as a helical segment. Residues 11 to 33 (GSICMVIGIVSLMLQIGNIISIW) form an involved in apical transport and lipid raft association region. The Virion surface segment spans residues 28-469 (NIISIWVSHS…GAELPFTIDK (442 aa)). Residues 36-90 (HSIQTGNQHQAEPCNQSIITYENNTWVNQTYVNISNTNFLTEKAVASVTLAGNSS) form a hypervariable stalk region region. N-linked (GlcNAc...) asparagine; by host glycans are attached at residues N50, N58, N63, N68, and N88. Residues 91–469 (LCPISGWAVY…GAELPFTIDK (379 aa)) are head of neuraminidase. Intrachain disulfides connect C92-C417, C124-C129, C184-C231, C233-C238, C279-C292, C281-C290, C318-C335, and C421-C446. R118 is a binding site for substrate. N-linked (GlcNAc...) asparagine; by host glycosylation is present at N146. D151 functions as the Proton donor/acceptor in the catalytic mechanism. R152 is a binding site for substrate. N-linked (GlcNAc...) asparagine; by host glycosylation occurs at N235. 277-278 (EE) provides a ligand contact to substrate. Position 293 (R293) interacts with substrate. Ca(2+) contacts are provided by D294, G298, and D324. R368 lines the substrate pocket. N386 carries an N-linked (GlcNAc...) asparagine; by host glycan. Y402 (nucleophile) is an active-site residue.

It belongs to the glycosyl hydrolase 34 family. As to quaternary structure, homotetramer. The cofactor is Ca(2+). Post-translationally, N-glycosylated.

Its subcellular location is the virion membrane. The protein resides in the host apical cell membrane. The catalysed reaction is Hydrolysis of alpha-(2-&gt;3)-, alpha-(2-&gt;6)-, alpha-(2-&gt;8)- glycosidic linkages of terminal sialic acid residues in oligosaccharides, glycoproteins, glycolipids, colominic acid and synthetic substrates.. Inhibited by the neuraminidase inhibitors zanamivir (Relenza) and oseltamivir (Tamiflu). These drugs interfere with the release of progeny virus from infected cells and are effective against all influenza strains. Resistance to neuraminidase inhibitors is quite rare. In terms of biological role, catalyzes the removal of terminal sialic acid residues from viral and cellular glycoconjugates. Cleaves off the terminal sialic acids on the glycosylated HA during virus budding to facilitate virus release. Additionally helps virus spread through the circulation by further removing sialic acids from the cell surface. These cleavages prevent self-aggregation and ensure the efficient spread of the progeny virus from cell to cell. Otherwise, infection would be limited to one round of replication. Described as a receptor-destroying enzyme because it cleaves a terminal sialic acid from the cellular receptors. May facilitate viral invasion of the upper airways by cleaving the sialic acid moieties on the mucin of the airway epithelial cells. Likely to plays a role in the budding process through its association with lipid rafts during intracellular transport. May additionally display a raft-association independent effect on budding. Plays a role in the determination of host range restriction on replication and virulence. Sialidase activity in late endosome/lysosome traffic seems to enhance virus replication. This chain is Neuraminidase, found in Aves (Cat).